We begin with the raw amino-acid sequence, 1619 residues long: Rap-GAP domain-containing protein DDB_G0281809 (1619 aa).

4 disordered regions span residues 128 to 249 (SMSN…TTPI), 289 to 316 (QQQQQQSPSITTGTVKGSKYRESVMPGS), 907 to 974 (SIGG…PYIN), and 1134 to 1153 (ISNNNTTTTSNNSIKSTSNN). Low complexity-rich tracts occupy residues 130–204 (SNNN…SLSL) and 231–249 (QISATTTAATSPTTPTTPI). A coiled-coil region spans residues 265–295 (FNEVVQQQQQQQQQQQQQQQQQQQQQQQQQS). Composition is skewed to low complexity over residues 916 to 926 (SGNSSQPSSTG) and 934 to 965 (SGSKSNSSSSSSSQPSSTGGSGNNSNSANGGS). A Rap-GAP domain is found at 1273-1494 (LNMLDSVSER…TNRKKLISDI (222 aa)). Residues 1554 to 1619 (IGTFTLPPPP…LSQSEDQSHK (66 aa)) form a disordered region. Over residues 1559–1573 (LPPPPISPTISPQPS) the composition is skewed to pro residues. Over residues 1574 to 1590 (PHLSSSGGSWASSKGGS) the composition is skewed to low complexity. Polar residues predominate over residues 1591–1619 (TQPTTPSGRTSNFLSRRPNLSQSEDQSHK).

The chain is Rap-GAP domain-containing protein DDB_G0281809 from Dictyostelium discoideum (Social amoeba).